A 162-amino-acid polypeptide reads, in one-letter code: Regulator of sigma D (162 aa).

Belongs to the Rsd/AlgQ family. In terms of assembly, interacts with RpoD.

The protein localises to the cytoplasm. Binds RpoD and negatively regulates RpoD-mediated transcription activation by preventing the interaction between the primary sigma factor RpoD with the catalytic core of the RNA polymerase and with promoter DNA. May be involved in replacement of the RNA polymerase sigma subunit from RpoD to RpoS during the transition from exponential growth to the stationary phase. This Salmonella arizonae (strain ATCC BAA-731 / CDC346-86 / RSK2980) protein is Regulator of sigma D.